A 257-amino-acid chain; its full sequence is Thiazole synthase (257 aa).

Lys97 functions as the Schiff-base intermediate with DXP in the catalytic mechanism. 1-deoxy-D-xylulose 5-phosphate-binding positions include Gly158, 184–185 (AG), and 206–207 (NT).

It belongs to the ThiG family. In terms of assembly, homotetramer. Forms heterodimers with either ThiH or ThiS.

It is found in the cytoplasm. The catalysed reaction is [ThiS sulfur-carrier protein]-C-terminal-Gly-aminoethanethioate + 2-iminoacetate + 1-deoxy-D-xylulose 5-phosphate = [ThiS sulfur-carrier protein]-C-terminal Gly-Gly + 2-[(2R,5Z)-2-carboxy-4-methylthiazol-5(2H)-ylidene]ethyl phosphate + 2 H2O + H(+). The protein operates within cofactor biosynthesis; thiamine diphosphate biosynthesis. Catalyzes the rearrangement of 1-deoxy-D-xylulose 5-phosphate (DXP) to produce the thiazole phosphate moiety of thiamine. Sulfur is provided by the thiocarboxylate moiety of the carrier protein ThiS. In vitro, sulfur can be provided by H(2)S. In Phocaeicola vulgatus (strain ATCC 8482 / DSM 1447 / JCM 5826 / CCUG 4940 / NBRC 14291 / NCTC 11154) (Bacteroides vulgatus), this protein is Thiazole synthase.